The following is a 224-amino-acid chain: Small ribosomal subunit protein uS3 (224 aa).

A KH type-2 domain is found at 39-107 (IREFLKKKPS…DVWVEIAEVK (69 aa)).

The protein belongs to the universal ribosomal protein uS3 family. In terms of assembly, part of the 30S ribosomal subunit. Forms a tight complex with proteins S10 and S14.

Its function is as follows. Binds the lower part of the 30S subunit head. Binds mRNA in the 70S ribosome, positioning it for translation. This chain is Small ribosomal subunit protein uS3, found in Chlamydia trachomatis serovar D (strain ATCC VR-885 / DSM 19411 / UW-3/Cx).